A 333-amino-acid chain; its full sequence is Leucine carboxyl methyltransferase 1 (333 aa).

Residues K42, R82, G107, D131, D181–L182, and E208 contribute to the S-adenosyl-L-methionine site.

It belongs to the methyltransferase superfamily. LCMT family.

It carries out the reaction [phosphatase 2A protein]-C-terminal L-leucine + S-adenosyl-L-methionine = [phosphatase 2A protein]-C-terminal L-leucine methyl ester + S-adenosyl-L-homocysteine. In terms of biological role, methylates the carboxyl group of the C-terminal leucine residue of protein phosphatase 2A catalytic subunits to form alpha-leucine ester residues. This is Leucine carboxyl methyltransferase 1 from Caenorhabditis elegans.